We begin with the raw amino-acid sequence, 129 residues long: Small ribosomal subunit protein uS11 (129 aa).

Belongs to the universal ribosomal protein uS11 family. Part of the 30S ribosomal subunit. Interacts with proteins S7 and S18. Binds to IF-3.

Its function is as follows. Located on the platform of the 30S subunit, it bridges several disparate RNA helices of the 16S rRNA. Forms part of the Shine-Dalgarno cleft in the 70S ribosome. This is Small ribosomal subunit protein uS11 from Erwinia tasmaniensis (strain DSM 17950 / CFBP 7177 / CIP 109463 / NCPPB 4357 / Et1/99).